The sequence spans 182 residues: MRRMWATQGLAVALALSVLPGSRALRPGDCEVCISYLGRFYQDLKDRDVTFSPATIENELIKFCREARGKENRLCYYIGATDDAATKIINEVSKPLAHHIPVEKICEKLKKKDSQICELKYDKQIDLSTVDLKKLRVKELKKILDDWGETCKGCAEKSDYIRKINELMPKYAPKAASARTDL.

An N-terminal signal peptide occupies residues 1-24; it reads MRRMWATQGLAVALALSVLPGSRA. 4 disulfide bridges follow: Cys30–Cys117, Cys33–Cys106, Cys64–Cys75, and Cys151–Cys154. Tyr76 is modified (phosphotyrosine). Residues 96–158 form an interacts with ERN1, EIF2AK3 and ATF6 region; it reads LAHHIPVEKI…ETCKGCAEKS (63 aa). The interval 129–172 is interacts with HSPA5; that stretch reads TVDLKKLRVKELKKILDDWGETCKGCAEKSDYIRKINELMPKYA.

The protein belongs to the ARMET family. As to quaternary structure, interacts directly (via SAP domain) with HSPA5/BiP; the interaction inhibits ATP binding to HSPA5/BiP and subsequent nucleotide exchange. Component of a complex containing at least CRELD2, MANF, MATN3 and PDIA4. Interacts (via C-terminus) with ERN1 (via luminal domain); the interaction is decreased in the presence of increasing concentrations of Ca(2+). Post-translationally, may contain sialic acid residues.

It localises to the secreted. The protein resides in the endoplasmic reticulum lumen. Its subcellular location is the sarcoplasmic reticulum lumen. Its function is as follows. Selectively promotes the survival of dopaminergic neurons of the ventral mid-brain. Modulates GABAergic transmission to the dopaminergic neurons of the substantia nigra. Enhances spontaneous, as well as evoked, GABAergic inhibitory postsynaptic currents in dopaminergic neurons. Inhibits cell proliferation and endoplasmic reticulum (ER) stress-induced cell death. Retained in the ER/sarcoplasmic reticulum (SR) through association with the endoplasmic reticulum chaperone protein HSPA5 under normal conditions. Stabilizes HSPA5/BiP in its substrate-bound ADP state, which facilitates HSPA5/BiP incorporation into chaperone-client complexes during endoplasmic reticulum stress, its interaction with HSPA5/BiP inhibits ATP binding to HSPA5/BiP and subsequent nucleotide exchange. As a result acts as a repressor of the unfolded protein response (UPR) pathway. Up-regulated and secreted by the ER/SR in response to ER stress and hypoxia. Following secretion by the ER/SR, directly binds to 3-O-sulfogalactosylceramide, a lipid sulfatide in the outer cell membrane of target cells. Sulfatide binding promotes its cellular uptake by endocytosis, and is required for its role in alleviating ER stress and cell toxicity under hypoxic and ER stress conditions. Essential for embryonic lung development. Required for the correct postnatal temporal and structural development of splenic white pulp. Required for the repair-associated myeloid response in skeletal muscle, acts as a regulator of phenotypic transition towards prorepair macrophages in response to muscle injury and as a result limits excessive proinflammatory signaling. Represses RELA expression and therefore NF-kB signaling in the myocardium, as a result limits macrophage infiltration of injured tissue and M1 macrophage differentiation in response to myocardial injury. Required for endochondral ossification in long bones and the skull during postnatal development. The protein is Mesencephalic astrocyte-derived neurotrophic factor of Homo sapiens (Human).